The following is a 551-amino-acid chain: Glucose-6-phosphate isomerase (551 aa).

Residue Glu349 is the Proton donor of the active site. Residues His378 and Lys480 contribute to the active site.

Belongs to the GPI family.

The protein resides in the cytoplasm. The enzyme catalyses alpha-D-glucose 6-phosphate = beta-D-fructose 6-phosphate. Its pathway is carbohydrate biosynthesis; gluconeogenesis. The protein operates within carbohydrate degradation; glycolysis; D-glyceraldehyde 3-phosphate and glycerone phosphate from D-glucose: step 2/4. Catalyzes the reversible isomerization of glucose-6-phosphate to fructose-6-phosphate. The protein is Glucose-6-phosphate isomerase of Parasynechococcus marenigrum (strain WH8102).